The following is a 194-amino-acid chain: Coiled-coil domain-containing protein 184 (194 aa).

Residues 39-68 (GMKELMEHLKAQLQALFEDVRAMRGALDEQ) adopt a coiled-coil conformation. The interval 101 to 176 (GLGVVGGKGS…LLGGDGPLVE (76 aa)) is disordered. The segment covering 135–145 (PEDEEEEEEEK) has biased composition (acidic residues).

The sequence is that of Coiled-coil domain-containing protein 184 (CCDC184) from Homo sapiens (Human).